The sequence spans 237 residues: Phosphoribosylaminoimidazole-succinocarboxamide synthase (237 aa).

The protein belongs to the SAICAR synthetase family.

The enzyme catalyses 5-amino-1-(5-phospho-D-ribosyl)imidazole-4-carboxylate + L-aspartate + ATP = (2S)-2-[5-amino-1-(5-phospho-beta-D-ribosyl)imidazole-4-carboxamido]succinate + ADP + phosphate + 2 H(+). It functions in the pathway purine metabolism; IMP biosynthesis via de novo pathway; 5-amino-1-(5-phospho-D-ribosyl)imidazole-4-carboxamide from 5-amino-1-(5-phospho-D-ribosyl)imidazole-4-carboxylate: step 1/2. The polypeptide is Phosphoribosylaminoimidazole-succinocarboxamide synthase (Salmonella arizonae (strain ATCC BAA-731 / CDC346-86 / RSK2980)).